A 919-amino-acid chain; its full sequence is Isoleucine--tRNA ligase (919 aa).

Residues 57–67 (PYANGHIHIGT) carry the 'HIGH' region motif. L-isoleucyl-5'-AMP is bound at residue glutamate 553. Residues 594 to 598 (KMSKS) carry the 'KMSKS' region motif. Lysine 597 contacts ATP. Positions 887, 890, 907, and 910 each coordinate Zn(2+).

This sequence belongs to the class-I aminoacyl-tRNA synthetase family. IleS type 1 subfamily. In terms of assembly, monomer. Requires Zn(2+) as cofactor.

Its subcellular location is the cytoplasm. The catalysed reaction is tRNA(Ile) + L-isoleucine + ATP = L-isoleucyl-tRNA(Ile) + AMP + diphosphate. Functionally, catalyzes the attachment of isoleucine to tRNA(Ile). As IleRS can inadvertently accommodate and process structurally similar amino acids such as valine, to avoid such errors it has two additional distinct tRNA(Ile)-dependent editing activities. One activity is designated as 'pretransfer' editing and involves the hydrolysis of activated Val-AMP. The other activity is designated 'posttransfer' editing and involves deacylation of mischarged Val-tRNA(Ile). This chain is Isoleucine--tRNA ligase, found in Thermotoga petrophila (strain ATCC BAA-488 / DSM 13995 / JCM 10881 / RKU-1).